An 819-amino-acid chain; its full sequence is Leucine--tRNA ligase (819 aa).

A 'HIGH' region motif is present at residues 36-46 (PYPSGKIHMGH). The 'KMSKS' region motif lies at 586–590 (KMSKS). ATP is bound at residue K589.

This sequence belongs to the class-I aminoacyl-tRNA synthetase family.

It is found in the cytoplasm. It catalyses the reaction tRNA(Leu) + L-leucine + ATP = L-leucyl-tRNA(Leu) + AMP + diphosphate. The chain is Leucine--tRNA ligase from Wolbachia pipientis subsp. Culex pipiens (strain wPip).